Reading from the N-terminus, the 200-residue chain is Urease accessory protein UreG (200 aa).

8–15 (GPVGSGKT) is a GTP binding site.

This sequence belongs to the SIMIBI class G3E GTPase family. UreG subfamily. In terms of assembly, homodimer. UreH, UreF and UreG form a complex that acts as a GTP-hydrolysis-dependent molecular chaperone, activating the urease apoprotein by helping to assemble the nickel containing metallocenter of UreC. The UreE protein probably delivers the nickel.

It is found in the cytoplasm. Facilitates the functional incorporation of the urease nickel metallocenter. This process requires GTP hydrolysis, probably effectuated by UreG. In Helicobacter hepaticus (strain ATCC 51449 / 3B1), this protein is Urease accessory protein UreG.